The primary structure comprises 266 residues: MEESEYESVLCVKPEVHVYRIPPRATNRGYRASEWQLDQPSWSGRLRITAKGKVAYIKLEDRTSGELFAQAPVDQFPGTAVESVTDSSRYFVIRIEDGNGRRAFIGLGFGDRGDAFDFNVALQDHFKWVKQQCEFAKQAQNPDEGPKLDLGFKDGQTIKINIANMRKKEGAAGTPRARPTSAGGLSLLPPPPGGKSSTVIPPSGEQLSVGGSLVQPAVVSGSGGATELWPQSKPAAAATADIWGDFTKSTGSPSSQSQPGTGWVQF.

2 disordered regions span residues 165–198 (MRKKEGAAGTPRARPTSAGGLSLLPPPPGGKSST) and 245–266 (DFTKSTGSPSSQSQPGTGWVQF). The residue at position 181 (Ser-181) is a Phosphoserine. 2 consecutive short sequence motifs (WXXF motif) follow at residues 243 to 246 (WGDF) and 263 to 266 (WVQF). Residues 249–266 (STGSPSSQSQPGTGWVQF) are compositionally biased toward low complexity.

Belongs to the NECAP family. In terms of assembly, interacts with AP1G1 and AP2A1 components of the adapter protein complexes AP-1 and AP-2. Interacts with the GAE domain proteins GGA1, GGA2 and GGA3. As to expression, expressed in brain, heart, kidney, liver, lung, skeletal muscles and testis (at protein level).

The protein localises to the cytoplasmic vesicle. It localises to the clathrin-coated vesicle membrane. It is found in the cell membrane. Functionally, involved in endocytosis. The protein is Adaptin ear-binding coat-associated protein 2 (Necap2) of Mus musculus (Mouse).